A 419-amino-acid polypeptide reads, in one-letter code: UDP-N-acetylglucosamine 1-carboxyvinyltransferase (419 aa).

K22 to N23 is a phosphoenolpyruvate binding site. R95 provides a ligand contact to UDP-N-acetyl-alpha-D-glucosamine. C119 (proton donor) is an active-site residue. 2-(S-cysteinyl)pyruvic acid O-phosphothioketal is present on C119. Residues K164–V167, D308, and I330 each bind UDP-N-acetyl-alpha-D-glucosamine.

It belongs to the EPSP synthase family. MurA subfamily.

It localises to the cytoplasm. It carries out the reaction phosphoenolpyruvate + UDP-N-acetyl-alpha-D-glucosamine = UDP-N-acetyl-3-O-(1-carboxyvinyl)-alpha-D-glucosamine + phosphate. Its pathway is cell wall biogenesis; peptidoglycan biosynthesis. Cell wall formation. Adds enolpyruvyl to UDP-N-acetylglucosamine. The polypeptide is UDP-N-acetylglucosamine 1-carboxyvinyltransferase (Rickettsia canadensis (strain McKiel)).